Consider the following 432-residue polypeptide: Trigger factor (432 aa).

In terms of domain architecture, PPIase FKBP-type spans 161–246 (EDRVTIDFTG…LKKVEERELP (86 aa)).

This sequence belongs to the FKBP-type PPIase family. Tig subfamily. Homodimer and monomer. In vivo most of the ribosomes are in complex with monomeric TF. Uncomplexed TF, however, is in a monomer-dimer equilibrium with approximately two thirds of TF existing in a dimeric state.

It is found in the cytoplasm. It catalyses the reaction [protein]-peptidylproline (omega=180) = [protein]-peptidylproline (omega=0). Functionally, involved in protein export. Acts as a chaperone by maintaining the newly synthesized protein in an open conformation. Functions as a peptidyl-prolyl cis-trans isomerase. This Shigella boydii serotype 18 (strain CDC 3083-94 / BS512) protein is Trigger factor.